We begin with the raw amino-acid sequence, 281 residues long: Kinetochore-associated protein NSL1 homolog (281 aa).

At Ser4 the chain carries Phosphoserine. Residue Thr244 is modified to Phosphothreonine.

As to quaternary structure, component of the MIS12 complex composed of MIS12, DSN1, NSL1/DC8 and PMF1. Interacts with KNL1.

It localises to the nucleus. It is found in the chromosome. The protein localises to the centromere. Its subcellular location is the kinetochore. Its function is as follows. Part of the MIS12 complex which is required for normal chromosome alignment and segregation and kinetochore formation during mitosis. The polypeptide is Kinetochore-associated protein NSL1 homolog (NSL1) (Homo sapiens (Human)).